A 154-amino-acid polypeptide reads, in one-letter code: Endoribonuclease YbeY (154 aa).

Zn(2+)-binding residues include His114, His118, and His124.

Belongs to the endoribonuclease YbeY family. Zn(2+) serves as cofactor.

It localises to the cytoplasm. Single strand-specific metallo-endoribonuclease involved in late-stage 70S ribosome quality control and in maturation of the 3' terminus of the 16S rRNA. The polypeptide is Endoribonuclease YbeY (Histophilus somni (strain 129Pt) (Haemophilus somnus)).